Reading from the N-terminus, the 394-residue chain is Phosphopentomutase (394 aa).

D13, D286, H291, D327, H328, and H339 together coordinate Mn(2+).

It belongs to the phosphopentomutase family. Mn(2+) is required as a cofactor.

Its subcellular location is the cytoplasm. It carries out the reaction 2-deoxy-alpha-D-ribose 1-phosphate = 2-deoxy-D-ribose 5-phosphate. The catalysed reaction is alpha-D-ribose 1-phosphate = D-ribose 5-phosphate. The protein operates within carbohydrate degradation; 2-deoxy-D-ribose 1-phosphate degradation; D-glyceraldehyde 3-phosphate and acetaldehyde from 2-deoxy-alpha-D-ribose 1-phosphate: step 1/2. Isomerase that catalyzes the conversion of deoxy-ribose 1-phosphate (dRib-1-P) and ribose 1-phosphate (Rib-1-P) to deoxy-ribose 5-phosphate (dRib-5-P) and ribose 5-phosphate (Rib-5-P), respectively. This chain is Phosphopentomutase, found in Bacillus anthracis (strain A0248).